A 753-amino-acid chain; its full sequence is Polyadenylate-binding protein, cytoplasmic and nuclear (753 aa).

The span at 1 to 26 (MSAEVSTTPAADNTVNGTPEATNAAA) shows a compositional bias: polar residues. The segment at 1–52 (MSAEVSTTPAADNTVNGTPEATNAAATSAPEVTAVESASPSTTPSASQPHSA) is disordered. The segment covering 37–52 (SASPSTTPSASQPHSA) has biased composition (low complexity). 4 RRM domains span residues 52 to 130 (ASLY…WSQR), 140 to 217 (GNVF…HHIS), 233 to 310 (TNVY…RAQK), and 336 to 460 (VNLY…LAQR). Disordered regions lie at residues 367 to 417 (VMRD…TEKK) and 602 to 645 (MGQG…REEV). Positions 379 to 417 (ESEKEKEKESNKENEKEGEEKTEEKPKESEEEPKKTEKK) are enriched in basic and acidic residues. Residues 605-631 (GIRGPGYGQGRGGAPVQGGPRPQGGRG) show a composition bias toward gly residues. Residues 648–725 (TGGLTAQTLS…ALSVYDEYMK (78 aa)) enclose the PABC domain. The disordered stretch occupies residues 728–753 (GEGEAPAESAKPKEDAAETATEENKS). The span at 737 to 753 (AKPKEDAAETATEENKS) shows a compositional bias: basic and acidic residues.

Belongs to the polyadenylate-binding protein type-1 family.

The protein resides in the cytoplasm. It localises to the nucleus. In terms of biological role, binds the poly(A) tail of mRNA. Appears to be an important mediator of the multiple roles of the poly(A) tail in mRNA biogenesis, stability and translation. In the nucleus, involved in both mRNA cleavage and polyadenylation. Is also required for efficient mRNA export to the cytoplasm. Acts in concert with a poly(A)-specific nuclease (PAN) to affect poly(A) tail shortening, which may occur concomitantly with either nucleocytoplasmic mRNA transport or translational initiation. In the cytoplasm, stimulates translation initiation and regulates mRNA decay through translation termination-coupled poly(A) shortening, probably mediated by PAN. The sequence is that of Polyadenylate-binding protein, cytoplasmic and nuclear (pab1) from Aspergillus fumigatus (strain ATCC MYA-4609 / CBS 101355 / FGSC A1100 / Af293) (Neosartorya fumigata).